A 147-amino-acid chain; its full sequence is Endoribonuclease YbeY (147 aa).

Zn(2+) contacts are provided by His109, His113, and His119.

It belongs to the endoribonuclease YbeY family. Zn(2+) is required as a cofactor.

It localises to the cytoplasm. In terms of biological role, single strand-specific metallo-endoribonuclease involved in late-stage 70S ribosome quality control and in maturation of the 3' terminus of the 16S rRNA. The protein is Endoribonuclease YbeY of Magnetococcus marinus (strain ATCC BAA-1437 / JCM 17883 / MC-1).